The chain runs to 577 residues: Methionine--tRNA ligase (577 aa).

Residues 21-31 (PYANGPLHVGH) carry the 'HIGH' region motif. Positions 153, 156, 166, and 169 each coordinate Zn(2+). The 'KMSKS' region motif lies at 355–359 (QMSTS). Residue T358 participates in ATP binding.

Belongs to the class-I aminoacyl-tRNA synthetase family. MetG type 1 subfamily. Monomer. Requires Zn(2+) as cofactor.

The protein resides in the cytoplasm. The enzyme catalyses tRNA(Met) + L-methionine + ATP = L-methionyl-tRNA(Met) + AMP + diphosphate. Functionally, is required not only for elongation of protein synthesis but also for the initiation of all mRNA translation through initiator tRNA(fMet) aminoacylation. The polypeptide is Methionine--tRNA ligase (Rubrobacter xylanophilus (strain DSM 9941 / JCM 11954 / NBRC 16129 / PRD-1)).